The primary structure comprises 399 residues: Ribonuclease D (399 aa).

A 3'-5' exonuclease domain is found at 31-197 (RVVTDNTALL…PLYHILEKEL (167 aa)). An HRDC domain is found at 239–318 (NPLELSRLRV…SQARRISSND (80 aa)).

This sequence belongs to the RNase D family. It depends on a divalent metal cation as a cofactor.

It is found in the cytoplasm. The catalysed reaction is Exonucleolytic cleavage that removes extra residues from the 3'-terminus of tRNA to produce 5'-mononucleotides.. Exonuclease involved in the 3' processing of various precursor tRNAs. Initiates hydrolysis at the 3'-terminus of an RNA molecule and releases 5'-mononucleotides. The protein is Ribonuclease D of Haemophilus influenzae (strain ATCC 51907 / DSM 11121 / KW20 / Rd).